The chain runs to 228 residues: MSTLWADLGPSLLPAFWVTIKLTIYSAIGAMIFGTILTTMRVSPVKILRTLSTAYINTVRNTPLTLVVLFCSFGLYQNLGLTLAGRESSTFLVDNNFRLAVLGFILYTSTFVAESLRSGINTVHFGQAEAARSLGLGFGATFRSIIFPQAVRAAIVPLGNTLIALTKNTTIASVIGVGEASLLMKATIENHANMLFVVFAIFAVGFMILTLPMGLGLGKLSERLAVKK.

5 helical membrane passes run 16–36, 64–84, 100–120, 145–165, and 195–215; these read FWVT…FGTI, LTLV…LTLA, AVLG…RSGI, IIFP…LIAL, and LFVV…PMGL. Positions 16 to 217 constitute an ABC transmembrane type-1 domain; it reads FWVTIKLTIY…ILTLPMGLGL (202 aa).

Belongs to the binding-protein-dependent transport system permease family. HisMQ subfamily. In terms of assembly, the complex is composed of two ATP-binding proteins (GluA), two transmembrane proteins (GluC and GluD) and a solute-binding protein (GluB).

The protein localises to the cell membrane. Functionally, part of the ABC transporter complex GluABCD involved in glutamate uptake. Probably responsible for the translocation of the substrate across the membrane. The protein is Glutamate transport system permease protein GluC of Corynebacterium glutamicum (strain ATCC 13032 / DSM 20300 / JCM 1318 / BCRC 11384 / CCUG 27702 / LMG 3730 / NBRC 12168 / NCIMB 10025 / NRRL B-2784 / 534).